The sequence spans 438 residues: Methylenetetrahydrofolate--tRNA-(uracil-5-)-methyltransferase TrmFO (438 aa).

9 to 14 provides a ligand contact to FAD; sequence GAGLAG.

Belongs to the MnmG family. TrmFO subfamily. Requires FAD as cofactor.

Its subcellular location is the cytoplasm. It catalyses the reaction uridine(54) in tRNA + (6R)-5,10-methylene-5,6,7,8-tetrahydrofolate + NADH + H(+) = 5-methyluridine(54) in tRNA + (6S)-5,6,7,8-tetrahydrofolate + NAD(+). The enzyme catalyses uridine(54) in tRNA + (6R)-5,10-methylene-5,6,7,8-tetrahydrofolate + NADPH + H(+) = 5-methyluridine(54) in tRNA + (6S)-5,6,7,8-tetrahydrofolate + NADP(+). In terms of biological role, catalyzes the folate-dependent formation of 5-methyl-uridine at position 54 (M-5-U54) in all tRNAs. This chain is Methylenetetrahydrofolate--tRNA-(uracil-5-)-methyltransferase TrmFO, found in Lactobacillus acidophilus (strain ATCC 700396 / NCK56 / N2 / NCFM).